The chain runs to 501 residues: Cell division control protein 24 (501 aa).

Interacts with dna2, pcn1 and rfc1.

It is found in the nucleus. Its subcellular location is the cytoplasm. Functionally, has a role in the progression of DNA replication and in the maintenance of genomic integrity. Acts during S phase, after initiation, where it is essential for completion. The chain is Cell division control protein 24 (cdc24) from Schizosaccharomyces pombe (strain 972 / ATCC 24843) (Fission yeast).